Reading from the N-terminus, the 118-residue chain is uncharacterized protein (118 aa).

The next 3 helical transmembrane spans lie at 22–44, 54–71, and 78–99; these read IIAS…FSIA, LSPL…PVLR, and PILS…VEWL.

It is found in the cell membrane. This is an uncharacterized protein from Archaeoglobus fulgidus (strain ATCC 49558 / DSM 4304 / JCM 9628 / NBRC 100126 / VC-16).